The sequence spans 206 residues: MSRYRGPRLKIVRRLGPLPGFTQKLYKSKSQYLGSSTTSSSSNKKISQYNIRLLEKQKLRFYYGLTERQLLKYVTIARNAKGPTGQVLLQLLEMRLDNIVFRLGMAPTIPAARQLVNHRHILVNDFTVNIPSYSCKLGDKISVQKRFESKTNIFANSTQSASLKVPSHLTLNPAKNEGLVHQIVDREFIGAKINELLVVEYYSRQV.

An S4 RNA-binding domain is found at 94–152; the sequence is MRLDNIVFRLGMAPTIPAARQLVNHRHILVNDFTVNIPSYSCKLGDKISVQKRFESKTN.

This sequence belongs to the universal ribosomal protein uS4 family. Part of the 30S ribosomal subunit. Contacts protein S5. The interaction surface between S4 and S5 is involved in control of translational fidelity.

The protein localises to the plastid. The protein resides in the chloroplast. Functionally, one of the primary rRNA binding proteins, it binds directly to 16S rRNA where it nucleates assembly of the body of the 30S subunit. In terms of biological role, with S5 and S12 plays an important role in translational accuracy. The polypeptide is Small ribosomal subunit protein uS4c (rps4) (Chara vulgaris (Common stonewort)).